The sequence spans 123 residues: MSVQILGKGKKVALKRRHARLRKHISGTPELPRLVVTRSNRHMVAQIIDDTKGVTLVSESTLTSDFAGFEGTKTEAAKKVGELIAKKAQDAGITAVVFDRGGNKYHGRVAAVAEGAREGGLAL.

This sequence belongs to the universal ribosomal protein uL18 family. As to quaternary structure, part of the 50S ribosomal subunit; part of the 5S rRNA/L5/L18/L25 subcomplex. Contacts the 5S and 23S rRNAs.

This is one of the proteins that bind and probably mediate the attachment of the 5S RNA into the large ribosomal subunit, where it forms part of the central protuberance. The protein is Large ribosomal subunit protein uL18 of Bifidobacterium adolescentis (strain ATCC 15703 / DSM 20083 / NCTC 11814 / E194a).